The chain runs to 571 residues: Leucine aminopeptidase A1, chloroplastic (571 aa).

The transit peptide at 1–53 (MATLRVSSLFASSSSSLHSNPSVFTKYQSSPKWAFSFPVTPLCSKRSKRIVHC) directs the protein to the chloroplast. Residues Lys342 and Asp347 each coordinate Mg(2+). Lys354 is a catalytic residue. Mg(2+)-binding residues include Asp367, Asp427, and Glu429. The active site involves Arg431.

This sequence belongs to the peptidase M17 family. In terms of assembly, homohexamer (dimer of homotrimers). Mg(2+) serves as cofactor. In terms of tissue distribution, observed during floral development. Expressed in healthy and senescent leaves, cotyledons (emergence from seed coats), pistils, sepals, petals, stamens, and floral buds (at protein level). Present at very low levels in healthy leaves.

It is found in the plastid. The protein localises to the chloroplast. The enzyme catalyses Release of an N-terminal amino acid, Xaa-|-Yaa-, in which Xaa is preferably Leu, but may be other amino acids including Pro although not Arg or Lys, and Yaa may be Pro. Amino acid amides and methyl esters are also readily hydrolyzed, but rates on arylamides are exceedingly low.. The catalysed reaction is Release of N-terminal proline from a peptide.. Its function is as follows. Catalyzes the removal of unsubstituted N-terminal amino acids from various peptides. When associated as homohexamer, catalyzes the proteolyzes of Xaa-Leu dipeptides. Possesses leucine aminopeptidase activity against the model substrate leucine-amido methyl coumarin. Presumably involved in the processing and regular turnover of intracellular proteins. Regulates wound signaling and has a role in insect defense. Functions as a molecular chaperone to protect proteins from heat-induced damage. The chain is Leucine aminopeptidase A1, chloroplastic from Solanum lycopersicum (Tomato).